A 305-amino-acid polypeptide reads, in one-letter code: GTP cyclohydrolase FolE2 (305 aa).

The protein belongs to the GTP cyclohydrolase IV family.

It catalyses the reaction GTP + H2O = 7,8-dihydroneopterin 3'-triphosphate + formate + H(+). It functions in the pathway cofactor biosynthesis; 7,8-dihydroneopterin triphosphate biosynthesis; 7,8-dihydroneopterin triphosphate from GTP: step 1/1. Its function is as follows. Converts GTP to 7,8-dihydroneopterin triphosphate. The sequence is that of GTP cyclohydrolase FolE2 from Xanthomonas axonopodis pv. citri (strain 306).